A 315-amino-acid polypeptide reads, in one-letter code: Ribosomal RNA small subunit methyltransferase H (315 aa).

Residues 35-37, D55, F79, D101, and Q108 contribute to the S-adenosyl-L-methionine site; that span reads GGH.

It belongs to the methyltransferase superfamily. RsmH family.

It localises to the cytoplasm. The catalysed reaction is cytidine(1402) in 16S rRNA + S-adenosyl-L-methionine = N(4)-methylcytidine(1402) in 16S rRNA + S-adenosyl-L-homocysteine + H(+). In terms of biological role, specifically methylates the N4 position of cytidine in position 1402 (C1402) of 16S rRNA. This Photobacterium profundum (strain SS9) protein is Ribosomal RNA small subunit methyltransferase H.